The chain runs to 874 residues: Alanine--tRNA ligase (874 aa).

Zn(2+) contacts are provided by His-561, His-565, Cys-663, and His-667.

This sequence belongs to the class-II aminoacyl-tRNA synthetase family. Requires Zn(2+) as cofactor.

It is found in the cytoplasm. The catalysed reaction is tRNA(Ala) + L-alanine + ATP = L-alanyl-tRNA(Ala) + AMP + diphosphate. Functionally, catalyzes the attachment of alanine to tRNA(Ala) in a two-step reaction: alanine is first activated by ATP to form Ala-AMP and then transferred to the acceptor end of tRNA(Ala). Also edits incorrectly charged Ser-tRNA(Ala) and Gly-tRNA(Ala) via its editing domain. The protein is Alanine--tRNA ligase of Trichodesmium erythraeum (strain IMS101).